A 296-amino-acid chain; its full sequence is Nitrogenase iron protein (296 aa).

11–18 (GKGGIGKS) serves as a coordination point for ATP. Cysteine 99 is a binding site for [4Fe-4S] cluster. At arginine 102 the chain carries ADP-ribosylarginine; by dinitrogenase reductase ADP-ribosyltransferase. Residue cysteine 133 coordinates [4Fe-4S] cluster.

Belongs to the NifH/BchL/ChlL family. As to quaternary structure, homodimer. Requires [4Fe-4S] cluster as cofactor. The reversible ADP-ribosylation of Arg-102 inactivates the nitrogenase reductase and regulates nitrogenase activity.

The catalysed reaction is N2 + 8 reduced [2Fe-2S]-[ferredoxin] + 16 ATP + 16 H2O = H2 + 8 oxidized [2Fe-2S]-[ferredoxin] + 2 NH4(+) + 16 ADP + 16 phosphate + 6 H(+). The key enzymatic reactions in nitrogen fixation are catalyzed by the nitrogenase complex, which has 2 components: the iron protein and the molybdenum-iron protein. The protein is Nitrogenase iron protein (nifH1) of Sinorhizobium fredii (strain NBRC 101917 / NGR234).